We begin with the raw amino-acid sequence, 367 residues long: Alanine racemase (367 aa).

The active-site Proton acceptor; specific for D-alanine is Lys-40. The residue at position 40 (Lys-40) is an N6-(pyridoxal phosphate)lysine. Arg-136 lines the substrate pocket. Tyr-263 functions as the Proton acceptor; specific for L-alanine in the catalytic mechanism. Met-310 is a binding site for substrate.

The protein belongs to the alanine racemase family. Pyridoxal 5'-phosphate serves as cofactor.

The enzyme catalyses L-alanine = D-alanine. The protein operates within amino-acid biosynthesis; D-alanine biosynthesis; D-alanine from L-alanine: step 1/1. Its function is as follows. Catalyzes the interconversion of L-alanine and D-alanine. May also act on other amino acids. In Streptococcus pneumoniae (strain Hungary19A-6), this protein is Alanine racemase (alr).